The sequence spans 179 residues: Ribulose bisphosphate carboxylase small subunit, chloroplastic 5 (179 aa).

Residues 1-58 (MASSATMLSSVATAACAAPAQASMVAPFVGLKSASAFPVTQKTATGLSTLPSNGGRVQ) constitute a chloroplast transit peptide.

Belongs to the RuBisCO small chain family. In terms of assembly, heterohexadecamer of 8 large and 8 small subunits.

The protein resides in the plastid. Its subcellular location is the chloroplast. Functionally, ruBisCO catalyzes two reactions: the carboxylation of D-ribulose 1,5-bisphosphate, the primary event in carbon dioxide fixation, as well as the oxidative fragmentation of the pentose substrate. Both reactions occur simultaneously and in competition at the same active site. Although the small subunit is not catalytic it is essential for maximal activity. This is Ribulose bisphosphate carboxylase small subunit, chloroplastic 5 from Fritillaria agrestis (Stinkbells).